The chain runs to 2153 residues: Genome polyprotein (2153 aa).

Residue Gly2 is the site of N-myristoyl glycine; by host attachment. Residues His213 to Asp240 form a disordered region. The span at Pro216–Arg232 shows a compositional bias: polar residues. The segment at Glu565–Val584 is amphipathic alpha-helix. Catalysis depends on for protease 2A activity residues His864 and Asp880. Zn(2+) is bound by residues Cys897 and Cys899. Cys951 serves as the catalytic For protease 2A activity. Zn(2+) is bound by residues Cys957 and His959. The segment at Ser1088–Gln1158 is membrane-binding. Positions Ser1088–Thr1224 are oligomerization. The segment at Ser1109–Gly1113 is RNA-binding. The SF3 helicase domain maps to Thr1187–Val1346. ATP is bound at residue Gly1214 to Ser1221. Positions 1353, 1365, and 1370 each coordinate Zn(2+). Residues Cys1353–Cys1370 form a C4-type; degenerate zinc finger. The tract at residues Glu1397–Val1404 is RNA-binding. Residues Leu1408–Gln1413 form an oligomerization region. Residues Val1460–Leu1480 lie within the membrane without spanning it. At Tyr1491 the chain carries O-(5'-phospho-RNA)-tyrosine. The region spanning Gly1511–Phe1689 is the Peptidase C3 domain. Catalysis depends on for protease 3C activity residues His1550, Glu1581, and Cys1657. The RdRp catalytic domain occupies Gly1920 to Glu2033. Mg(2+)-binding residues include Asp1926 and Asp2019.

The protein belongs to the picornaviruses polyprotein family. Interacts with capsid protein VP1 and capsid protein VP3 to form heterotrimeric protomers. In terms of assembly, interacts with capsid protein VP0, and capsid protein VP3 to form heterotrimeric protomers. Five protomers subsequently associate to form pentamers which serve as building blocks for the capsid. Interacts with capsid protein VP2, capsid protein VP3 and capsid protein VP4 following cleavage of capsid protein VP0. Interacts (via C-terminus) with capsid protein VP4 (via C-terminus). Interacts with host CDHR3 (via N-terminus); this interaction occurs near each threefold vertex of the capsid and allows the virus attachment and entry into the host cell. As to quaternary structure, interacts with capsid protein VP1 and capsid protein VP3 in the mature capsid. Interacts with host CDHR3 (via N-terminus); this interaction occurs near each threefold vertex of the capsid and allows the virus attachment and entry into the host cell. Interacts with capsid protein VP0 and capsid protein VP1 to form heterotrimeric protomers. Five protomers subsequently associate to form pentamers which serve as building blocks for the capsid. Interacts with capsid protein VP4 in the mature capsid. Interacts with protein 2C; this interaction may be important for virion morphogenesis. Interacts with host CDHR3 (via N-terminus); this interaction occurs near each threefold vertex of the capsid and allows the virus attachment and entry into the host cell. In terms of assembly, interacts (via C-terminus) with capsid protein VP1 (via C-terminus). Interacts with capsid protein VP3. As to quaternary structure, homodimer. Homohexamer; forms a hexameric ring structure with 6-fold symmetry characteristic of AAA+ ATPases. Interacts (via N-terminus) with host RTN3 (via reticulon domain); this interaction is important for viral replication. Interacts with capsid protein VP3; this interaction may be important for virion morphogenesis. In terms of assembly, interacts with protein 3CD. As to quaternary structure, homodimer. Interacts with host GBF1. Interacts (via GOLD domain) with host ACBD3 (via GOLD domain); this interaction allows the formation of a viral protein 3A/ACBD3 heterotetramer with a 2:2 stoichiometry, which will stimulate the recruitment of host PI4KB in order to synthesize PI4P at the viral RNA replication sites. Interacts with RNA-directed RNA polymerase. In terms of assembly, interacts with protein 3AB and with RNA-directed RNA polymerase. As to quaternary structure, interacts with Viral protein genome-linked and with protein 3CD. The cofactor is Mg(2+). Post-translationally, specific enzymatic cleavages in vivo by the viral proteases yield processing intermediates and the mature proteins. Myristoylation is required for the formation of pentamers during virus assembly. Further assembly of 12 pentamers and a molecule of genomic RNA generates the provirion. In terms of processing, during virion maturation, immature virions are rendered infectious following cleavage of VP0 into VP4 and VP2. This maturation seems to be an autocatalytic event triggered by the presence of RNA in the capsid and it is followed by a conformational change infectious virion. Post-translationally, myristoylation is required during RNA encapsidation and formation of the mature virus particle. VPg is uridylylated by the polymerase into VPg-pUpU. This acts as a nucleotide-peptide primer for the genomic RNA replication.

The protein resides in the virion. The protein localises to the host cytoplasm. It localises to the host cytoplasmic vesicle membrane. It is found in the host nucleus. The enzyme catalyses a ribonucleoside 5'-triphosphate + H2O = a ribonucleoside 5'-diphosphate + phosphate + H(+). It catalyses the reaction Selective cleavage of Gln-|-Gly bond in the poliovirus polyprotein. In other picornavirus reactions Glu may be substituted for Gln, and Ser or Thr for Gly.. The catalysed reaction is Selective cleavage of Tyr-|-Gly bond in the picornavirus polyprotein.. It carries out the reaction RNA(n) + a ribonucleoside 5'-triphosphate = RNA(n+1) + diphosphate. Its activity is regulated as follows. Replication or transcription is subject to high level of random mutations by the nucleotide analog ribavirin. Its function is as follows. Forms an icosahedral capsid of pseudo T=3 symmetry with capsid proteins VP2 and VP3. The capsid is 300 Angstroms in diameter, composed of 60 copies of each capsid protein and enclosing the viral positive strand RNA genome. Capsid protein VP1 mainly forms the vertices of the capsid. The VP1 C-termini form 60 dominant spike-like protrusions on the surface of the virion. Capsid protein VP1 interacts with host cell receptor CDHR3 to provide virion attachment to target host cells. This attachment induces virion internalization. Tyrosine kinases are probably involved in the entry process. After binding to its receptor, the capsid undergoes conformational changes. Capsid protein VP1 N-terminus (that contains an amphipathic alpha-helix) and capsid protein VP4 are externalized. Together, they shape a pore in the host membrane through which viral genome is translocated to host cell cytoplasm. Forms an icosahedral capsid of pseudo T=3 symmetry with capsid proteins VP2 and VP3. The capsid is 300 Angstroms in diameter, composed of 60 copies of each capsid protein and enclosing the viral positive strand RNA genome. In terms of biological role, lies on the inner surface of the capsid shell. After binding to the host receptor, the capsid undergoes conformational changes. Capsid protein VP4 is released, Capsid protein VP1 N-terminus is externalized, and together, they shape a pore in the host membrane through which the viral genome is translocated into the host cell cytoplasm. Functionally, component of immature procapsids, which is cleaved into capsid proteins VP4 and VP2 after maturation. Allows the capsid to remain inactive before the maturation step. Its function is as follows. Cysteine protease that cleaves viral polyprotein and specific host proteins. It is responsible for the autocatalytic cleavage between the P1 and P2 regions, which is the first cleavage occurring in the polyprotein. Also cleaves the host translation initiation factor EIF4G1, in order to shut down the capped cellular mRNA translation. Inhibits the host nucleus-cytoplasm protein and RNA trafficking by cleaving host members of the nuclear pores. Counteracts stress granule formation probably by antagonizing its assembly or promoting its dissassembly. Plays an essential role in the virus replication cycle by acting as a viroporin. Creates a pore in the host endoplasmic reticulum and as a consequence releases Ca2+ in the cytoplasm of infected cell. In turn, high levels of cytoplasmic calcium may trigger membrane trafficking and transport of viral ER-associated proteins to viroplasms, sites of viral genome replication. In terms of biological role, induces and associates with structural rearrangements of intracellular membranes. Displays RNA-binding, nucleotide binding and NTPase activities. May play a role in virion morphogenesis and viral RNA encapsidation by interacting with the capsid protein VP3. Functionally, localizes the viral replication complex to the surface of membranous vesicles. Together with protein 3CD binds the Cis-Active RNA Element (CRE) which is involved in RNA synthesis initiation. Acts as a cofactor to stimulate the activity of 3D polymerase, maybe through a nucleid acid chaperone activity. Its function is as follows. Localizes the viral replication complex to the surface of membranous vesicles. It inhibits host cell endoplasmic reticulum-to-Golgi apparatus transport and causes the disassembly of the Golgi complex, possibly through GBF1 interaction. This would result in depletion of MHC, trail receptors and IFN receptors at the host cell surface. Plays an essential role in viral RNA replication by recruiting ACBD3 and PI4KB at the viral replication sites, thereby allowing the formation of the rearranged membranous structures where viral replication takes place. Acts as a primer for viral RNA replication and remains covalently bound to viral genomic RNA. VPg is uridylylated prior to priming replication into VPg-pUpU. The oriI viral genomic sequence may act as a template for this. The VPg-pUpU is then used as primer on the genomic RNA poly(A) by the RNA-dependent RNA polymerase to replicate the viral genome. During genome replication, the VPg-RNA linkage is removed by the host TDP2, thereby accelerating replication. During the late stage of the replication cycle, host TDP2 is excluded from sites of viral RNA synthesis and encapsidation, allowing for the generation of progeny virions. In terms of biological role, involved in the viral replication complex and viral polypeptide maturation. It exhibits protease activity with a specificity and catalytic efficiency that is different from protease 3C. Protein 3CD lacks polymerase activity. Protein 3CD binds to the 5'UTR of the viral genome. Functionally, major viral protease that mediates proteolytic processing of the polyprotein. Cleaves host EIF5B, contributing to host translation shutoff. Also cleaves host PABPC1, contributing to host translation shutoff. Its function is as follows. Replicates the viral genomic RNA on the surface of intracellular membranes. May form linear arrays of subunits that propagate along a strong head-to-tail interaction called interface-I. Covalently attaches UMP to a tyrosine of VPg, which is used to prime RNA synthesis. The positive stranded RNA genome is first replicated at virus induced membranous vesicles, creating a dsRNA genomic replication form. This dsRNA is then used as template to synthesize positive stranded RNA genomes. ss(+)RNA genomes are either translated, replicated or encapsidated. The chain is Genome polyprotein from Homo sapiens (Human).